Here is a 587-residue protein sequence, read N- to C-terminus: Zinc finger protein 496 (587 aa).

Positions 1–40 are disordered; it reads MPTALCPRVLAPKESEEPRKMRSPPGENPSPQGELPSPES. The span at 11–20 shows a compositional bias: basic and acidic residues; that stretch reads APKESEEPRK. Residue Lys13 forms a Glycyl lysine isopeptide (Lys-Gly) (interchain with G-Cter in SUMO2) linkage. One can recognise an SCAN box domain in the interval 42–124; the sequence is RRLFRRFRYQ…AAVEALEREP (83 aa). Position 185 is a phosphoserine (Ser185). In terms of domain architecture, KRAB spans 221–291; the sequence is SPFKDMILCF…ELQDLQGKEV (71 aa). The interval 260–282 is disordered; it reads PPNDLAAQPDLSQGEENEPRVPE. At Ser299 the chain carries Phosphoserine. The disordered stretch occupies residues 358-399; it reads SSSGDEDSQHGPYCTEELGSPTEKQRSLPASHRSSTEAGGEV. Over residues 389 to 399 the composition is skewed to polar residues; the sequence is HRSSTEAGGEV. Residue Lys403 forms a Glycyl lysine isopeptide (Lys-Gly) (interchain with G-Cter in SUMO2) linkage. The C2H2-type 1; degenerate zinc finger occupies 406 to 428; that stretch reads YVCPNCGKIFRWRVNFIRHLRSR. 2 C2H2-type zinc fingers span residues 435–457 and 463–485; these read HECS…LESH and YRCG…RRIH. A disordered region spans residues 488–513; sequence PDRLQPVEKREQAASEDADKGPKEPL. Residue Lys496 forms a Glycyl lysine isopeptide (Lys-Gly) (interchain with G-Cter in SUMO2) linkage. C2H2-type zinc fingers lie at residues 522–545 and 553–575; these read FQCC…SHFH and FQCR…ERLH.

Belongs to the krueppel C2H2-type zinc-finger protein family. As to quaternary structure, interacts (via zinc-fingers) with JARID2. Interacts with NSD1.

The protein resides in the nucleus. DNA-binding transcription factor that can both act as an activator and a repressor. This is Zinc finger protein 496 (ZNF496) from Homo sapiens (Human).